Here is a 320-residue protein sequence, read N- to C-terminus: MVGYDPKPDGRNNTKFQVAVAGSVSGLVTRALISPFDVIKIRFQLQHERLSRSDPNAKYHGILQASRQILQEEGPTAFWKGHIPAQILSIGYGAVQFLSFEMLTELVHRGSVYDAREFSVHFVCGGLAACMATLTVHPVDVLRTRFAAQGEPKVYNTLCHAVGTMYRSEGPQVFYKGLAPTLIAIFPYAGLQFSCYSSLKHLYKWAIPAEGKKNENLQNLLCGSGAGVISKTLTYPLDLFKKRLQVGGFEHARAAFGQVRRYKGLMDCAKQVLQKEGALGFFKGLSPSLLKAALSTGFMFFWYEFFCNVFHCMNRTASQR.

3 Solcar repeats span residues Asn13–Leu106, Arg116–Leu202, and Asn214–Val309. The helical transmembrane segment at Ala19 to Ile39 threads the bilayer. Position 51 is a phosphoserine (Ser51). The next 4 membrane-spanning stretches (helical) occupy residues Ile87–Val107, Phe122–Leu142, Val173–Phe193, and Leu220–Phe240. A Substrate recognition motif is present at residues Lys241–Val246. Residues Ala293–Met313 form a helical membrane-spanning segment.

It belongs to the mitochondrial carrier (TC 2.A.29) family.

Its subcellular location is the mitochondrion membrane. It catalyses the reaction thiamine phosphate(out) + thiamine diphosphate(in) = thiamine phosphate(in) + thiamine diphosphate(out). Its function is as follows. Mitochondrial transporter mediating uptake of thiamine diphosphate into mitochondria. It is not clear if the antiporter activity is affected by the membrane potential or by the proton electrochemical gradient. This chain is Mitochondrial thiamine pyrophosphate carrier (SLC25A19), found in Pongo abelii (Sumatran orangutan).